A 319-amino-acid chain; its full sequence is MAAQYYMEFEKPVVELEKKVQELAELAGTNAELAGEVTKLEKKVDRMREVIFSNLSRWQTVQVARHIERPFTLDYLNLIFTDFTELHGDRLFGDDHAIVAGLAKLDGEPVVVIGHQKGRDTKEKVYRNFGMPNPEGYRKALRIMELAERFRLPIITFVDTPGAFPGIGAEERGQAEAIARNLREMAALTVPIIVVVTGEGGSGGALAIAVGDRVLMLQYSIYAVISPEGCAAILWSDGTKGEQAAEALKLTAKDLKELEVIDEIVPEPLGGAHRDHEAMARTLHEAIARQLKELKAIPAEQLVEERYQKFRKMSRFIEG.

One can recognise a CoA carboxyltransferase C-terminal domain in the interval Lys39–Glu293.

This sequence belongs to the AccA family. In terms of assembly, acetyl-CoA carboxylase is a heterohexamer composed of biotin carboxyl carrier protein (AccB), biotin carboxylase (AccC) and two subunits each of ACCase subunit alpha (AccA) and ACCase subunit beta (AccD).

Its subcellular location is the cytoplasm. It catalyses the reaction N(6)-carboxybiotinyl-L-lysyl-[protein] + acetyl-CoA = N(6)-biotinyl-L-lysyl-[protein] + malonyl-CoA. The protein operates within lipid metabolism; malonyl-CoA biosynthesis; malonyl-CoA from acetyl-CoA: step 1/1. Functionally, component of the acetyl coenzyme A carboxylase (ACC) complex. First, biotin carboxylase catalyzes the carboxylation of biotin on its carrier protein (BCCP) and then the CO(2) group is transferred by the carboxyltransferase to acetyl-CoA to form malonyl-CoA. The sequence is that of Acetyl-coenzyme A carboxylase carboxyl transferase subunit alpha from Geobacter sulfurreducens (strain ATCC 51573 / DSM 12127 / PCA).